Consider the following 571-residue polypeptide: Peptide-N4-(N-acetyl-beta-glucosaminyl)asparagine amidase A (571 aa).

12 N-linked (GlcNAc...) asparagine glycosylation sites follow: N121, N143, N197, N241, N318, N367, N390, N423, N457, N481, N524, and N529.

Heterodimer of a large and a small chain. Post-translationally, is highly glycosylated and is largly resistant against self-deglycosylation.

It catalyses the reaction Hydrolysis of an N(4)-(acetyl-beta-D-glucosaminyl)asparagine residue in which the glucosamine residue may be further glycosylated, to yield a (substituted) N-acetyl-beta-D-glucosaminylamine and a peptide containing an aspartate residue.. This is Peptide-N4-(N-acetyl-beta-glucosaminyl)asparagine amidase A from Prunus dulcis (Almond).